The sequence spans 1165 residues: Sperm-associated antigen 5 (1165 aa).

A disordered region spans residues 1–23 (MWRVKTLNLGLSPSPQKGKPAMS). 7 positions are modified to phosphoserine: S12, S14, S66, S161, S321, S333, and S342. The interval 431-457 (TVPHREARDSSTQTDSSPCGVTKTPKH) is disordered. The span at 440–449 (SSTQTDSSPC) shows a compositional bias: polar residues. The interaction with KNSTRN stretch occupies residues 453 to 821 (KTPKHLQDSK…LRDTVDSLRA (369 aa)). A coiled-coil region spans residues 509 to 856 (RSKTLVSSCS…LLAEQLQSLT (348 aa)). The disordered stretch occupies residues 875 to 907 (PSTGSAPAQEHPLSNDSSISEQTPTAAVDEVPE). Over residues 876-897 (STGSAPAQEHPLSNDSSISEQT) the composition is skewed to polar residues. The stretch at 937 to 1146 (DLEKSLAEMS…IQHVYETLLS (210 aa)) forms a coiled coil. The residue at position 946 (S946) is a Phosphoserine; by GSK3-beta.

In terms of assembly, homodimer, with a globular head domain and a long stalk. Homooligomer; the globular head domains associate, resulting in aster-like structures. Binds to microtubules in the mitotic spindle. Interacts with DCLRE1B/Apollo. Part of an astrin (SPAG5)-kinastrin (SKAP) complex containing KNSTRN, SPAG5, PLK1, DYNLL1 and SGO2A. Interacts with KNSTRN. Interacts with RPTOR; this interaction competes with RPTOR binding to MTOR, resulting in decreased mTORC1 formation. Interacts with G3BP1. The complex formed with G3BP1 and RPTOR is increased by oxidative stress. Interacts with OSBPL8, PCM1 and CDK5RAP2. Interacts (via C-terminus) with NUMA1 (via C-terminus); this interaction promotes the recruitment of SPAG5 to the microtubules at spindle poles in a dynein-dynactin-dependent manner. Interacts with DYNLL1. In terms of processing, phosphorylated by AURKA. In terms of tissue distribution, detected in testis, but not in the other tissues tested.

It is found in the cytoplasm. The protein resides in the cytoskeleton. Its subcellular location is the spindle. It localises to the spindle pole. The protein localises to the chromosome. It is found in the centromere. The protein resides in the kinetochore. Its subcellular location is the midbody. It localises to the microtubule organizing center. The protein localises to the centrosome. It is found in the centriolar satellite. Essential component of the mitotic spindle required for normal chromosome segregation and progression into anaphase. Required for chromosome alignment, normal timing of sister chromatid segregation, and maintenance of spindle pole architecture. In complex with SKAP, promotes stable microtubule-kinetochore attachments. May contribute to the regulation of separase activity. May regulate AURKA localization to mitotic spindle, but not to centrosomes and CCNB1 localization to both mitotic spindle and centrosomes. Involved in centriole duplication. Required for CDK5RAP22, CEP152, WDR62 and CEP63 centrosomal localization and promotes the centrosomal localization of CDK2. In non-mitotic cells, upon stress induction, inhibits mammalian target of rapamycin complex 1 (mTORC1) association and recruits the mTORC1 component RPTOR to stress granules (SGs), thereby preventing mTORC1 hyperactivation-induced apoptosis. May enhance GSK3B-mediated phosphorylation of other substrates, such as MAPT/TAU. This chain is Sperm-associated antigen 5 (Spag5), found in Mus musculus (Mouse).